Here is a 533-residue protein sequence, read N- to C-terminus: Na(+)/H(+) antiporter NhaB (533 aa).

The next 11 helical transmembrane spans lie at 10 to 30 (IGNF…SFLI), 67 to 87 (PGGL…SQVL), 98 to 118 (LLLV…LFVF), 131 to 165 (VSLL…FYSI), 209 to 229 (LLMH…VGEP), 247 to 267 (IRMS…CFIV), 310 to 330 (AFVG…VGLI), 355 to 375 (EEAL…AVII), 396 to 416 (LVIF…VFVG), 454 to 474 (ATPN…APLI), and 481 to 501 (MVWM…MAIQ).

This sequence belongs to the NhaB Na(+)/H(+) (TC 2.A.34) antiporter family.

Its subcellular location is the cell inner membrane. The enzyme catalyses 2 Na(+)(in) + 3 H(+)(out) = 2 Na(+)(out) + 3 H(+)(in). Functionally, na(+)/H(+) antiporter that extrudes sodium in exchange for external protons. The polypeptide is Na(+)/H(+) antiporter NhaB (Shewanella sp. (strain ANA-3)).